Consider the following 247-residue polypeptide: MLRRVMIKETWEVAKNVRAFRFDEKLDFIPGQFIMLWLPGINEKPFSLADKDLIVVKKVGPFTSKLFKLEEGDYVWIRGPYGNGFKSVEGKVALVAGGIGIPPIYALAKYGNLEEKVLIYGARSKEELATLDIENYVDEVVITTDDGSAGIKGFPTDVLARRKVEFSQVYACGPEVMLAKVLEIMNYERTQISAERYMKCGIGICGSCALGPYLVCRDGPVFTGEQLKGTEIGKFSRLPDGRIKSLR.

The FAD-binding FR-type domain occupies 1–87 (MLRRVMIKET…RGPYGNGFKS (87 aa)). Residues C200, C205, C208, and C216 each contribute to the [2Fe-2S] cluster site.

The protein belongs to the PyrK family. As to quaternary structure, heterotetramer of 2 PyrK and 2 PyrD type B subunits. It depends on [2Fe-2S] cluster as a cofactor. Requires FAD as cofactor.

The protein operates within pyrimidine metabolism; UMP biosynthesis via de novo pathway; orotate from (S)-dihydroorotate (NAD(+) route): step 1/1. Functionally, responsible for channeling the electrons from the oxidation of dihydroorotate from the FMN redox center in the PyrD type B subunit to the ultimate electron acceptor NAD(+). The sequence is that of Probable dihydroorotate dehydrogenase B (NAD(+)), electron transfer subunit from Pyrococcus abyssi (strain GE5 / Orsay).